Consider the following 489-residue polypeptide: Coronin-1B (489 aa).

At serine 2 the chain carries Phosphoserine. WD repeat units lie at residues 80-120 (GHTG…LTSP), 130-170 (GHTK…ELYR), 174-213 (LHPD…LVAE), 217-260 (AHEG…EPMA), and 265-305 (DSSN…PYIH). Residues 414–443 (DSRPAMAPGSSRLGAPASTTAAADATPSGS) are disordered. A compositionally biased stretch (low complexity) spans 427-443 (GAPASTTAAADATPSGS). Residues 449-474 (EAGKLEEVMQELRALRALVKEQGERI) adopt a coiled-coil conformation.

It belongs to the WD repeat coronin family. Forms homooligomers, but does not form complexes with the other coronins. Interacts with Arp2/3 complex components, including ACTR2, ARPC1B and ARPC2. Binds actin. Phosphorylation on Ser-2 regulates the interaction with the Arp2/3 complex and cell motility in fibroblasts. Phosphorylation does not seem to affect subcellular location.

It is found in the cytoplasm. The protein resides in the cytoskeleton. Its subcellular location is the stress fiber. In terms of biological role, regulates leading edge dynamics and cell motility in fibroblasts. May be involved in cytokinesis and signal transduction. The polypeptide is Coronin-1B (CORO1B) (Pongo abelii (Sumatran orangutan)).